Reading from the N-terminus, the 264-residue chain is Thymidylate synthase (264 aa).

Arg-21 contacts dUMP. His-51 provides a ligand contact to (6R)-5,10-methylene-5,6,7,8-tetrahydrofolate. Position 126 to 127 (126 to 127) interacts with dUMP; that stretch reads RR. Cys-146 serves as the catalytic Nucleophile. DUMP contacts are provided by residues 166–169, Asn-177, and 207–209; these read RSGD and HIY. Asp-169 serves as a coordination point for (6R)-5,10-methylene-5,6,7,8-tetrahydrofolate. Residue Ala-263 participates in (6R)-5,10-methylene-5,6,7,8-tetrahydrofolate binding.

This sequence belongs to the thymidylate synthase family. Bacterial-type ThyA subfamily. In terms of assembly, homodimer.

Its subcellular location is the cytoplasm. The enzyme catalyses dUMP + (6R)-5,10-methylene-5,6,7,8-tetrahydrofolate = 7,8-dihydrofolate + dTMP. It functions in the pathway pyrimidine metabolism; dTTP biosynthesis. Catalyzes the reductive methylation of 2'-deoxyuridine-5'-monophosphate (dUMP) to 2'-deoxythymidine-5'-monophosphate (dTMP) while utilizing 5,10-methylenetetrahydrofolate (mTHF) as the methyl donor and reductant in the reaction, yielding dihydrofolate (DHF) as a by-product. This enzymatic reaction provides an intracellular de novo source of dTMP, an essential precursor for DNA biosynthesis. The sequence is that of Thymidylate synthase from Sinorhizobium medicae (strain WSM419) (Ensifer medicae).